The following is a 1454-amino-acid chain: Mediator of RNA polymerase II transcription subunit 14 (1454 aa).

Residues 1–34 (MAPVQLENHQLVPPGGGGGGSGGPPSAPAPPPPG) form a disordered region. Over residues 14-23 (PGGGGGGSGG) the composition is skewed to gly residues. The segment covering 25 to 34 (PSAPAPPPPG) has biased composition (pro residues). The short motif at 69–73 (LTDLL) is the LXXLL motif 1 element. The interval 188 to 566 (KQATLHQLNQ…VPNKPTQLSY (379 aa)) is interaction with STAT2. The interaction with SREBF1 stretch occupies residues 500-824 (LGQQRCKQSI…TKGSSISIQW (325 aa)). A phosphoserine mark is found at Ser617 and Ser986. Residues 973–1167 (ARRRSVNEDD…MPPPRKLPQR (195 aa)) are disordered. Over residues 1001–1011 (QPPPQQQPFPK) the composition is skewed to pro residues. Composition is skewed to polar residues over residues 1024–1054 (PPTSYHSTVNQSPSMMHTQSPGNLHAASSPS) and 1092–1101 (DPSSPYTMVS). 5 positions are modified to phosphoserine: Ser1112, Ser1119, Ser1128, Ser1136, and Ser1144. Residues 1147-1156 (AGTSSQTMPT) are compositionally biased toward polar residues. The short motif at 1182 to 1186 (LNILL) is the LXXLL motif 2 element.

It belongs to the Mediator complex subunit 14 family. Interacts with GATA1. Component of the Mediator complex, which is composed of MED1, MED4, MED6, MED7, MED8, MED9, MED10, MED11, MED12, MED13, MED13L, MED14, MED15, MED16, MED17, MED18, MED19, MED20, MED21, MED22, MED23, MED24, MED25, MED26, MED27, MED29, MED30, MED31, CCNC, CDK8 and CDC2L6/CDK11. The MED12, MED13, CCNC and CDK8 subunits form a distinct module termed the CDK8 module. Mediator containing the CDK8 module is less active than Mediator lacking this module in supporting transcriptional activation. Individual preparations of the Mediator complex lacking one or more distinct subunits have been variously termed ARC, CRSP, DRIP, PC2, SMCC and TRAP. Interacts with AR, ESR1, SREBF1 and STAT2. As to expression, ubiquitous.

It localises to the nucleus. Its function is as follows. Component of the Mediator complex, a coactivator involved in the regulated transcription of nearly all RNA polymerase II-dependent genes. Mediator functions as a bridge to convey information from gene-specific regulatory proteins to the basal RNA polymerase II transcription machinery. Mediator is recruited to promoters by direct interactions with regulatory proteins and serves as a scaffold for the assembly of a functional preinitiation complex with RNA polymerase II and the general transcription factors. This chain is Mediator of RNA polymerase II transcription subunit 14 (MED14), found in Homo sapiens (Human).